The primary structure comprises 198 residues: Peptidyl-tRNA hydrolase (198 aa).

Tyr-18 contacts tRNA. His-23 acts as the Proton acceptor in catalysis. Residues Tyr-69, Asn-71, and Asn-117 each coordinate tRNA.

The protein belongs to the PTH family. As to quaternary structure, monomer.

It is found in the cytoplasm. The catalysed reaction is an N-acyl-L-alpha-aminoacyl-tRNA + H2O = an N-acyl-L-amino acid + a tRNA + H(+). In terms of biological role, hydrolyzes ribosome-free peptidyl-tRNAs (with 1 or more amino acids incorporated), which drop off the ribosome during protein synthesis, or as a result of ribosome stalling. Functionally, catalyzes the release of premature peptidyl moieties from peptidyl-tRNA molecules trapped in stalled 50S ribosomal subunits, and thus maintains levels of free tRNAs and 50S ribosomes. The sequence is that of Peptidyl-tRNA hydrolase from Aeromonas hydrophila subsp. hydrophila (strain ATCC 7966 / DSM 30187 / BCRC 13018 / CCUG 14551 / JCM 1027 / KCTC 2358 / NCIMB 9240 / NCTC 8049).